The sequence spans 219 residues: Ribose-5-phosphate isomerase A (219 aa).

Substrate is bound by residues 29–32 (TGST), 82–85 (DGAD), and 95–98 (KGGG). Glutamate 104 (proton acceptor) is an active-site residue. Position 122 (lysine 122) interacts with substrate.

The protein belongs to the ribose 5-phosphate isomerase family. As to quaternary structure, homodimer.

It carries out the reaction aldehydo-D-ribose 5-phosphate = D-ribulose 5-phosphate. The protein operates within carbohydrate degradation; pentose phosphate pathway; D-ribose 5-phosphate from D-ribulose 5-phosphate (non-oxidative stage): step 1/1. Functionally, catalyzes the reversible conversion of ribose-5-phosphate to ribulose 5-phosphate. The chain is Ribose-5-phosphate isomerase A from Chromobacterium violaceum (strain ATCC 12472 / DSM 30191 / JCM 1249 / CCUG 213 / NBRC 12614 / NCIMB 9131 / NCTC 9757 / MK).